A 196-amino-acid polypeptide reads, in one-letter code: 7-methyl-GTP pyrophosphatase (196 aa).

Residue aspartate 72 is the Proton acceptor of the active site.

It belongs to the Maf family. YceF subfamily. A divalent metal cation serves as cofactor.

Its subcellular location is the cytoplasm. The enzyme catalyses N(7)-methyl-GTP + H2O = N(7)-methyl-GMP + diphosphate + H(+). Nucleoside triphosphate pyrophosphatase that hydrolyzes 7-methyl-GTP (m(7)GTP). May have a dual role in cell division arrest and in preventing the incorporation of modified nucleotides into cellular nucleic acids. This Neisseria meningitidis serogroup A / serotype 4A (strain DSM 15465 / Z2491) protein is 7-methyl-GTP pyrophosphatase.